The chain runs to 295 residues: Glutamyl-Q tRNA(Asp) synthetase (295 aa).

Residues 9 to 13 and glutamate 45 contribute to the L-glutamate site; that span reads RFAPT. The 'HIGH' region motif lies at 12–22; it reads PTPSGFLHFGS. Zn(2+) contacts are provided by cysteine 101, cysteine 103, tyrosine 115, and cysteine 119. L-glutamate-binding residues include tyrosine 172 and arginine 190. Positions 228 to 232 match the 'KMSKS' region motif; the sequence is KLGKS. Lysine 231 is an ATP binding site.

This sequence belongs to the class-I aminoacyl-tRNA synthetase family. GluQ subfamily. Zn(2+) is required as a cofactor.

Functionally, catalyzes the tRNA-independent activation of glutamate in presence of ATP and the subsequent transfer of glutamate onto a tRNA(Asp). Glutamate is transferred on the 2-amino-5-(4,5-dihydroxy-2-cyclopenten-1-yl) moiety of the queuosine in the wobble position of the QUC anticodon. This chain is Glutamyl-Q tRNA(Asp) synthetase, found in Pseudomonas putida (strain GB-1).